A 310-amino-acid chain; its full sequence is Protein BIG GRAIN 1 (310 aa).

The tract at residues 81 to 141 is disordered; the sequence is RAPGPHATTS…KKAKKPGASI (61 aa). The span at 90–106 shows a compositional bias: low complexity; the sequence is SSSSECSSYGGFSSSEA.

The protein belongs to the BIG GRAIN 1 (BG1) plant protein family.

It is found in the cell membrane. In terms of biological role, involved in auxin transport. Positive regulator of the auxin signaling pathway involved in gravitropism, plant growth and grain development. This is Protein BIG GRAIN 1 from Oryza sativa subsp. indica (Rice).